The following is a 1020-amino-acid chain: Sodium/potassium-transporting ATPase subunit alpha-2 (1020 aa).

The propeptide occupies 1–5 (MGRGA). The tract at residues 1–31 (MGRGAGREYSPAATTAENGGGKKKQKEKELD) is disordered. Over 6-85 (GREYSPAATT…NALTPPPTTP (80 aa)) the chain is Cytoplasmic. Serine 10 carries the post-translational modification Phosphoserine. The tract at residues 80 to 82 (PPP) is interaction with phosphoinositide-3 kinase. A helical membrane pass occupies residues 86 to 106 (EWVKFCRQLFGGFSILLWIGA). Residues 107–129 (ILCFLAYGIQAAMEDEPSNDNLY) are Extracellular-facing. A helical membrane pass occupies residues 130 to 150 (LGVVLAAVVIVTGCFSYYQEA). At 151 to 286 (KSSKIMDSFK…VGRTPIAMEI (136 aa)) the chain is on the cytoplasmic side. The segment covering 212-227 (DNSSLTGESEPQTRSP) has biased composition (polar residues). Residues 212 to 231 (DNSSLTGESEPQTRSPEFTH) are disordered. Residues 287-306 (EHFIQLITGVAVFLGVSFFV) form a helical membrane-spanning segment. The Extracellular portion of the chain corresponds to 307 to 318 (LSLILGYSWLEA). The helical transmembrane segment at 319 to 336 (VIFLIGIIVANVPEGLLA) threads the bilayer. Topologically, residues 337-769 (TVTVCLTLTA…EEGRLIFDNL (433 aa)) are cytoplasmic. Aspartate 374 (4-aspartylphosphate intermediate) is an active-site residue. Residues serine 439, serine 450, and serine 559 each carry the phosphoserine modification. A Phosphothreonine modification is found at threonine 570. Phosphoserine is present on residues serine 587 and serine 672. Mg(2+)-binding residues include aspartate 714 and aspartate 718. The chain crosses the membrane as a helical span at residues 770 to 789 (KKSIAYTLTSNIPEITPFLL). Over 790–799 (FIIANIPLPL) the chain is Extracellular. The helical transmembrane segment at 800–820 (GTVTILCIDLGTDMVPAISLA) threads the bilayer. Residues 821 to 840 (YEAAESDIMKRQPRNPQTDK) are Cytoplasmic-facing. Phosphoserine is present on serine 826. The chain crosses the membrane as a helical span at residues 841-863 (LVNERLISMAYGQIGMIQALGGF). Residues 864–915 (FTYFVILAENGFLPSRLLGIRLDWDDRSMNDLEDSYGQEWTYEQRKVVEFTC) lie on the Extracellular side of the membrane. Residues 916–935 (HTAFFASIVVVQWADLIICK) form a helical membrane-spanning segment. Topologically, residues 936–948 (TRRNSVFQQGMKN) are cytoplasmic. Serine 940 is subject to Phosphoserine; by PKA. A helical transmembrane segment spans residues 949 to 967 (KILIFGLLEETALAAFLSY). Residues 968-982 (CPGMGVALRMYPLKV) lie on the Extracellular side of the membrane. Residues 983 to 1003 (TWWFCAFPYSLLIFIYDEVRK) traverse the membrane as a helical segment. Residues 1004–1020 (LILRRYPGGWVEKETYY) are Cytoplasmic-facing.

The protein belongs to the cation transport ATPase (P-type) (TC 3.A.3) family. Type IIC subfamily. As to quaternary structure, the sodium/potassium-transporting ATPase is composed of a catalytic alpha subunit, an auxiliary non-catalytic beta subunit and an additional regulatory subunit. Interacts with regulatory subunit FXYD1.

It localises to the membrane. The protein localises to the cell membrane. It carries out the reaction K(+)(out) + Na(+)(in) + ATP + H2O = K(+)(in) + Na(+)(out) + ADP + phosphate + H(+). Its function is as follows. This is the catalytic component of the active enzyme, which catalyzes the hydrolysis of ATP coupled with the exchange of sodium and potassium ions across the plasma membrane. This action creates the electrochemical gradient of sodium and potassium, providing the energy for active transport of various nutrients. The sequence is that of Sodium/potassium-transporting ATPase subunit alpha-2 (ATP1A2) from Sus scrofa (Pig).